We begin with the raw amino-acid sequence, 90 residues long: Acylphosphatase (90 aa).

Residues 5–90 form the Acylphosphatase-like domain; that stretch reads CVKASVKGIV…WRHIDGFEIK (86 aa). Catalysis depends on residues arginine 20 and asparagine 38.

This sequence belongs to the acylphosphatase family.

The enzyme catalyses an acyl phosphate + H2O = a carboxylate + phosphate + H(+). The chain is Acylphosphatase (acyP) from Photobacterium profundum (strain SS9).